Consider the following 103-residue polypeptide: Large ribosomal subunit protein uL24 (103 aa).

The protein belongs to the universal ribosomal protein uL24 family. In terms of assembly, part of the 50S ribosomal subunit.

One of two assembly initiator proteins, it binds directly to the 5'-end of the 23S rRNA, where it nucleates assembly of the 50S subunit. In terms of biological role, one of the proteins that surrounds the polypeptide exit tunnel on the outside of the subunit. The polypeptide is Large ribosomal subunit protein uL24 (Bacillus licheniformis (strain ATCC 14580 / DSM 13 / JCM 2505 / CCUG 7422 / NBRC 12200 / NCIMB 9375 / NCTC 10341 / NRRL NRS-1264 / Gibson 46)).